The primary structure comprises 206 residues: dTTP/UTP pyrophosphatase (206 aa).

The active-site Proton acceptor is Asp-79.

The protein belongs to the Maf family. YhdE subfamily. It depends on a divalent metal cation as a cofactor.

The protein localises to the cytoplasm. The enzyme catalyses dTTP + H2O = dTMP + diphosphate + H(+). It catalyses the reaction UTP + H2O = UMP + diphosphate + H(+). Functionally, nucleoside triphosphate pyrophosphatase that hydrolyzes dTTP and UTP. May have a dual role in cell division arrest and in preventing the incorporation of modified nucleotides into cellular nucleic acids. This Rhizobium etli (strain ATCC 51251 / DSM 11541 / JCM 21823 / NBRC 15573 / CFN 42) protein is dTTP/UTP pyrophosphatase.